The following is a 272-amino-acid chain: Putative esterase/lipase 3 (272 aa).

Residue His34 is part of the active site. The active-site Charge relay system is the Ser100.

It belongs to the lipase/esterase LIP3/BchO family.

The sequence is that of Putative esterase/lipase 3 from Mycoplasma pneumoniae (strain ATCC 29342 / M129 / Subtype 1) (Mycoplasmoides pneumoniae).